A 576-amino-acid chain; its full sequence is POU domain, class 6, transcription factor 1 (576 aa).

Positions 65–88 are disordered; the sequence is PAEAGSCDPDHSAEATVAARSPSE. Residues 414–488 form the POU-specific domain; the sequence is EDGINLEEIR…VLEKWLMEAE (75 aa). The homeobox DNA-binding region spans 509-568; sequence KRKRRTSFTPQAIEALNAYFEKNPLPTGQEITEIAKELNYDREVVRVWFCNRRQTLKNTS.

It belongs to the POU transcription factor family. Class-6 subfamily. As to expression, isoform C1 and isoform C2 are found in the brain, while isoform C7 is found in the testis.

It localises to the nucleus. In terms of biological role, transcription factor that binds preferentially to a variant of the octamer motif (5'-ATGATAAT-3'). This chain is POU domain, class 6, transcription factor 1 (Pou6f1), found in Mus musculus (Mouse).